The sequence spans 329 residues: Mitochondrial substrate carrier family protein W (329 aa).

Residues Met-1–Glu-39 are Mitochondrial intermembrane-facing. 3 Solcar repeats span residues His-34 to Leu-119, Glu-133 to Ile-221, and Leu-231 to Phe-321. Residues Met-40–Ile-60 form a helical membrane-spanning segment. Over Lys-61–Asn-90 the chain is Mitochondrial matrix. A helical membrane pass occupies residues Leu-91–Ser-111. Topologically, residues Thr-112–Pro-135 are mitochondrial intermembrane. The chain crosses the membrane as a helical span at residues Leu-136 to Ile-156. Residues Trp-157 to Gly-193 lie on the Mitochondrial matrix side of the membrane. The helical transmembrane segment at Leu-194 to Leu-214 threads the bilayer. Over Tyr-215–Glu-230 the chain is Mitochondrial intermembrane. The helical transmembrane segment at Leu-231–Ala-251 threads the bilayer. Residues Tyr-252–Gly-296 lie on the Mitochondrial matrix side of the membrane. The chain crosses the membrane as a helical span at residues Met-297–Tyr-315. Residues Glu-316–Phe-329 are Mitochondrial intermembrane-facing.

The protein belongs to the mitochondrial carrier (TC 2.A.29) family.

Its subcellular location is the mitochondrion inner membrane. Mitochondrial solute carriers shuttle metabolites, nucleotides, and cofactors through the mitochondrial inner membrane. This chain is Mitochondrial substrate carrier family protein W (mcfW), found in Dictyostelium discoideum (Social amoeba).